Reading from the N-terminus, the 468-residue chain is Keratin, type I cytoskeletal 26 (468 aa).

The tract at residues 1-82 (MSFRLSGGSR…GNEHSLLSGN (82 aa)) is head. Residues 83-118 (EKVTMQNLNDRLASYLDHVHALEEANADLEQKIKGW) form a coil 1A region. The region spanning 83 to 398 (EKVTMQNLND…NLLDGEERKS (316 aa)) is the IF rod domain. The interval 119-140 (YEKCEPGSSREHDHDYSRYFSV) is linker 1. The tract at residues 141 to 232 (IEDLKRQIIS…KSHEEEMEVL (92 aa)) is coil 1B. The linker 12 stretch occupies residues 233–255 (QYTAGGNVNVEMNATPGVDLTVL). A coil 2 region spans residues 256–394 (LNNMRAEYED…DIYCNLLDGE (139 aa)). The segment at 395 to 465 (ERKSKSTCYK…NITVEQRVPS (71 aa)) is tail.

This sequence belongs to the intermediate filament family. As to quaternary structure, heterotetramer of two type I and two type II keratins. Strongly expressed in skin and scalp, and weak expression observed in thymus and tongue. In the hair follicle, expression is restricted to the mid- to upper inner root sheath cuticle, being present slightly above the apex of the dermal papilla (at protein level).

This Homo sapiens (Human) protein is Keratin, type I cytoskeletal 26.